Consider the following 281-residue polypeptide: Putative pyruvate, phosphate dikinase regulatory protein (281 aa).

ADP is bound at residue 153–160 (GISRTSKT).

This sequence belongs to the pyruvate, phosphate/water dikinase regulatory protein family. PDRP subfamily.

It carries out the reaction N(tele)-phospho-L-histidyl/L-threonyl-[pyruvate, phosphate dikinase] + ADP = N(tele)-phospho-L-histidyl/O-phospho-L-threonyl-[pyruvate, phosphate dikinase] + AMP + H(+). The catalysed reaction is N(tele)-phospho-L-histidyl/O-phospho-L-threonyl-[pyruvate, phosphate dikinase] + phosphate + H(+) = N(tele)-phospho-L-histidyl/L-threonyl-[pyruvate, phosphate dikinase] + diphosphate. Its function is as follows. Bifunctional serine/threonine kinase and phosphorylase involved in the regulation of the pyruvate, phosphate dikinase (PPDK) by catalyzing its phosphorylation/dephosphorylation. The polypeptide is Putative pyruvate, phosphate dikinase regulatory protein (Bdellovibrio bacteriovorus (strain ATCC 15356 / DSM 50701 / NCIMB 9529 / HD100)).